A 332-amino-acid polypeptide reads, in one-letter code: 4-hydroxy-3-methylbut-2-enyl diphosphate reductase (332 aa).

Cys13 is a [4Fe-4S] cluster binding site. Residues His41 and His75 each coordinate (2E)-4-hydroxy-3-methylbut-2-enyl diphosphate. Positions 41 and 75 each coordinate dimethylallyl diphosphate. Residues His41 and His75 each coordinate isopentenyl diphosphate. Cys97 contributes to the [4Fe-4S] cluster binding site. A (2E)-4-hydroxy-3-methylbut-2-enyl diphosphate-binding site is contributed by His125. His125 lines the dimethylallyl diphosphate pocket. His125 is an isopentenyl diphosphate binding site. The active-site Proton donor is Glu127. Thr168 is a (2E)-4-hydroxy-3-methylbut-2-enyl diphosphate binding site. Residue Cys229 coordinates [4Fe-4S] cluster. Residues Ser257, Ser258, Asn259, and Ser306 each coordinate (2E)-4-hydroxy-3-methylbut-2-enyl diphosphate. Dimethylallyl diphosphate-binding residues include Ser257, Ser258, Asn259, and Ser306. Residues Ser257, Ser258, Asn259, and Ser306 each contribute to the isopentenyl diphosphate site.

The protein belongs to the IspH family. The cofactor is [4Fe-4S] cluster.

It catalyses the reaction isopentenyl diphosphate + 2 oxidized [2Fe-2S]-[ferredoxin] + H2O = (2E)-4-hydroxy-3-methylbut-2-enyl diphosphate + 2 reduced [2Fe-2S]-[ferredoxin] + 2 H(+). It carries out the reaction dimethylallyl diphosphate + 2 oxidized [2Fe-2S]-[ferredoxin] + H2O = (2E)-4-hydroxy-3-methylbut-2-enyl diphosphate + 2 reduced [2Fe-2S]-[ferredoxin] + 2 H(+). It functions in the pathway isoprenoid biosynthesis; dimethylallyl diphosphate biosynthesis; dimethylallyl diphosphate from (2E)-4-hydroxy-3-methylbutenyl diphosphate: step 1/1. The protein operates within isoprenoid biosynthesis; isopentenyl diphosphate biosynthesis via DXP pathway; isopentenyl diphosphate from 1-deoxy-D-xylulose 5-phosphate: step 6/6. In terms of biological role, catalyzes the conversion of 1-hydroxy-2-methyl-2-(E)-butenyl 4-diphosphate (HMBPP) into a mixture of isopentenyl diphosphate (IPP) and dimethylallyl diphosphate (DMAPP). Acts in the terminal step of the DOXP/MEP pathway for isoprenoid precursor biosynthesis. In Chlorobaculum tepidum (strain ATCC 49652 / DSM 12025 / NBRC 103806 / TLS) (Chlorobium tepidum), this protein is 4-hydroxy-3-methylbut-2-enyl diphosphate reductase.